A 346-amino-acid polypeptide reads, in one-letter code: Nicotinate-nucleotide--dimethylbenzimidazole phosphoribosyltransferase (346 aa).

Glu312 (proton acceptor) is an active-site residue.

This sequence belongs to the CobT family.

The catalysed reaction is 5,6-dimethylbenzimidazole + nicotinate beta-D-ribonucleotide = alpha-ribazole 5'-phosphate + nicotinate + H(+). It participates in nucleoside biosynthesis; alpha-ribazole biosynthesis; alpha-ribazole from 5,6-dimethylbenzimidazole: step 1/2. Functionally, catalyzes the synthesis of alpha-ribazole-5'-phosphate from nicotinate mononucleotide (NAMN) and 5,6-dimethylbenzimidazole (DMB). This chain is Nicotinate-nucleotide--dimethylbenzimidazole phosphoribosyltransferase, found in Cupriavidus taiwanensis (strain DSM 17343 / BCRC 17206 / CCUG 44338 / CIP 107171 / LMG 19424 / R1) (Ralstonia taiwanensis (strain LMG 19424)).